Consider the following 265-residue polypeptide: Mlc titration factor A (265 aa).

Zn(2+) contacts are provided by His-111, His-148, His-152, and Glu-211.

It belongs to the MtfA family. Interacts with Mlc. Zn(2+) is required as a cofactor.

Its subcellular location is the cytoplasm. Involved in the modulation of the activity of the glucose-phosphotransferase system (glucose-PTS). Interacts with the transcriptional repressor Mlc, preventing its interaction with DNA and leading to the modulation of expression of genes regulated by Mlc, including ptsG, which encodes the PTS system glucose-specific EIICB component. In terms of biological role, shows zinc-dependent metallopeptidase activity. In Salmonella paratyphi A (strain AKU_12601), this protein is Mlc titration factor A.